Consider the following 145-residue polypeptide: Putative antiporter subunit mnhG2 (145 aa).

3 helical membrane passes run 11–31 (IAAV…IGIV), 51–71 (VLLT…FFSV), and 72–92 (RLLL…HLVA).

Belongs to the CPA3 antiporters (TC 2.A.63) subunit G family. May form a heterooligomeric complex that consists of seven subunits: mnhA2, mnhB2, mnhC2, mnhD2, mnhE2, mnhF2 and mnhG2.

The protein localises to the cell membrane. This is Putative antiporter subunit mnhG2 (mnhG2) from Staphylococcus aureus (strain bovine RF122 / ET3-1).